We begin with the raw amino-acid sequence, 874 residues long: Coatomer subunit gamma-1 (874 aa).

Positions 1 to 11 (MLKKFDKKDEE) are enriched in basic and acidic residues. A disordered region spans residues 1–21 (MLKKFDKKDEESGGGSNPFQH). HEAT repeat units follow at residues 64–101 (TEAT…IAED), 283–320 (KELA…KHPS), 322–355 (VTAC…GSEG), and 356–392 (SIDR…KYPR). Threonine 594 is subject to Phosphothreonine. An interaction with ZNF289/ARFGAP2 region spans residues 609–874 (RQEIFQEQLA…PVDIVLASVG (266 aa)).

Belongs to the COPG family. Oligomeric complex that consists of at least the alpha, beta, beta', gamma, delta, epsilon and zeta subunits. Interacts with ZNF289/ARFGAP2 through its C-terminal appendage domain. Interacts with EGFR upon EGF treatment; interaction is essential for regulation of EGF-dependent nuclear transport of EGFR by retrograde trafficking from the Golgi to the ER. The coatomer interacts with KDEL receptors; the interaction is important for retrograde trafficking of KDEL-bearing proteins from the Golgi to the endoplasmic reticulum. Interacts with COPB1. Interacts with TMED10 (via C-terminus). Interacts with TMED2, TMED3, TMED7 and TMED9.

It is found in the cytoplasm. The protein localises to the cytosol. The protein resides in the golgi apparatus membrane. It localises to the cytoplasmic vesicle. Its subcellular location is the COPI-coated vesicle membrane. Its function is as follows. The coatomer is a cytosolic protein complex that binds to dilysine motifs and reversibly associates with Golgi non-clathrin-coated vesicles, which further mediate biosynthetic protein transport from the ER, via the Golgi up to the trans Golgi network. Coatomer complex is required for budding from Golgi membranes, and is essential for the retrograde Golgi-to-ER transport of dilysine-tagged proteins. In mammals, the coatomer can only be recruited by membranes associated to ADP-ribosylation factors (ARFs), which are small GTP-binding proteins; the complex also influences the Golgi structural integrity, as well as the processing, activity, and endocytic recycling of LDL receptors. Required for limiting lipid storage in lipid droplets. Involved in lipid homeostasis by regulating the presence of perilipin family members PLIN2 and PLIN3 at the lipid droplet surface and promoting the association of adipocyte triglyceride lipase (PNPLA2) with the lipid droplet surface to mediate lipolysis. The protein is Coatomer subunit gamma-1 (COPG1) of Bos taurus (Bovine).